The primary structure comprises 286 residues: MRLLPRLLLLLLLVFPATVLLRGGPGGSLAEAQDLSEDEETVEDSVIEDEDDEAEVEEDEPTDLAEDREEEDVSGEPEASPSADTTILFVKGEDFPANNIVRFLVGFTNKGTEDFIVESLDASFRYPQDYQFYIQNFTALPLNTIVPPQRQATFEYSFIPAEPMGGRPFGLVINLNYKDFNGNVFQDAVFNQTVTVIEREDGLDGQTIFMYMSLAGLGLLVVVGLHQLLESRNRKRPIQKVEMGTSSQNDVDMSWIPQETLNQINKASPRRLPRKRPQKRSVGSDE.

An N-terminal signal peptide occupies residues 1-21 (MRLLPRLLLLLLLVFPATVLL). At 22–207 (RGGPGGSLAE…EREDGLDGQT (186 aa)) the chain is on the lumenal side. Residues 28–83 (SLAEAQDLSEDEETVEDSVIEDEDDEAEVEEDEPTDLAEDREEEDVSGEPEASPSA) are disordered. The segment covering 34–75 (DLSEDEETVEDSVIEDEDDEAEVEEDEPTDLAEDREEEDVSG) has biased composition (acidic residues). N-linked (GlcNAc...) asparagine glycans are attached at residues N136 and N191. Residues 208-228 (IFMYMSLAGLGLLVVVGLHQL) form a helical membrane-spanning segment. Residues 229-286 (LESRNRKRPIQKVEMGTSSQNDVDMSWIPQETLNQINKASPRRLPRKRPQKRSVGSDE) lie on the Cytoplasmic side of the membrane. Position 247 is a phosphoserine (S247). T260 carries the phosphothreonine modification. Residues 264 to 286 (INKASPRRLPRKRPQKRSVGSDE) are disordered. S268 carries the phosphoserine modification. Residues 268-279 (SPRRLPRKRPQK) are compositionally biased toward basic residues.

It belongs to the TRAP-alpha family. Heterotetramer of TRAP-alpha, TRAP-beta, TRAP-delta and TRAP-gamma. Interacts with palmitoylated calnexin (CALX), the interaction is required for efficient folding of glycosylated proteins. In terms of processing, phosphorylated in its cytoplasmic tail.

It is found in the endoplasmic reticulum membrane. Its function is as follows. TRAP proteins are part of a complex whose function is to bind calcium to the ER membrane and thereby regulate the retention of ER resident proteins. May be involved in the recycling of the translocation apparatus after completion of the translocation process or may function as a membrane-bound chaperone facilitating folding of translocated proteins. The polypeptide is Translocon-associated protein subunit alpha (SSR1) (Oryctolagus cuniculus (Rabbit)).